A 547-amino-acid chain; its full sequence is MTGDKDPQSVSRPNYGSISHPPSSEPQQEPLRTTYLSEKIPIPDTEPGTFSLRKLWAFTGPGFLMSIAFLDPGNIESDLQAGAVAGFKLLWVLLWATVLGLLCQRLAARLGVVTGKDLGEICHLYYPKVPRTLLWLTIELAIVGSDMQEVIGTAIAFSLLSAGRIPLWGGVLITIVDTFFFLFLDNYGLRKLEAFFGILITIMALTFGYEYVVARPAQVALLQGLLLPSCPGCGRPELLQAVGIVGAIIMPHNIYLHSALVKSREIDRSRRPDIREANMYFLIEASIALSVSFFINLFVVAVFGQAFYQQTNEAAFNVCANSSLHDYAKIFPRNNLTVEVDIYQGGVMLGCVFGPAALYIWAVGLLAAGQSSTMTGTYAGQFVMEGFLRLRWSRFARVLLTRSCAILPTVLVVVFRDLKDLSGLNDLLNVLQSLLLPFAVLPILTFTSMPALMQEFANGRLSKAITSFIMALVCAINLYFVVIYLPSLPHPAYFILVALLAIVYLGLTTYLVWTCFIAHGVTLLAHSSHQHFLYGLPDVEEKGKISG.

The disordered stretch occupies residues 1–30; the sequence is MTGDKDPQSVSRPNYGSISHPPSSEPQQEP. The Cytoplasmic portion of the chain corresponds to 1 to 54; that stretch reads MTGDKDPQSVSRPNYGSISHPPSSEPQQEPLRTTYLSEKIPIPDTEPGTFSLRK. The span at 8–17 shows a compositional bias: polar residues; it reads QSVSRPNYGS. The span at 21–30 shows a compositional bias: low complexity; that stretch reads PPSSEPQQEP. Residues 55-75 form a helical membrane-spanning segment; it reads LWAFTGPGFLMSIAFLDPGNI. Residues 76 to 81 are Extracellular-facing; it reads ESDLQA. Residues 82–102 form a helical membrane-spanning segment; it reads GAVAGFKLLWVLLWATVLGLL. Over 103–139 the chain is Cytoplasmic; sequence CQRLAARLGVVTGKDLGEICHLYYPKVPRTLLWLTIE. A helical membrane pass occupies residues 140 to 160; sequence LAIVGSDMQEVIGTAIAFSLL. Residues 161-164 are Extracellular-facing; it reads SAGR. Residues 165–185 form a helical membrane-spanning segment; that stretch reads IPLWGGVLITIVDTFFFLFLD. The Cytoplasmic segment spans residues 186–193; the sequence is NYGLRKLE. Residues 194–214 traverse the membrane as a helical segment; it reads AFFGILITIMALTFGYEYVVA. Topologically, residues 215 to 240 are extracellular; that stretch reads RPAQVALLQGLLLPSCPGCGRPELLQ. A helical membrane pass occupies residues 241–261; it reads AVGIVGAIIMPHNIYLHSALV. The Cytoplasmic segment spans residues 262-286; that stretch reads KSREIDRSRRPDIREANMYFLIEAS. Residues 287-307 form a helical membrane-spanning segment; sequence IALSVSFFINLFVVAVFGQAF. The Extracellular segment spans residues 308–346; sequence YQQTNEAAFNVCANSSLHDYAKIFPRNNLTVEVDIYQGG. N-linked (GlcNAc...) asparagine glycosylation is found at N321 and N335. Residues 347-367 traverse the membrane as a helical segment; that stretch reads VMLGCVFGPAALYIWAVGLLA. Topologically, residues 368-394 are cytoplasmic; the sequence is AGQSSTMTGTYAGQFVMEGFLRLRWSR. Residues 395 to 415 form a helical membrane-spanning segment; that stretch reads FARVLLTRSCAILPTVLVVVF. At 416-432 the chain is on the extracellular side; it reads RDLKDLSGLNDLLNVLQ. Residues 433–453 traverse the membrane as a helical segment; sequence SLLLPFAVLPILTFTSMPALM. The Cytoplasmic segment spans residues 454-464; the sequence is QEFANGRLSKA. Residues 465–485 form a helical membrane-spanning segment; sequence ITSFIMALVCAINLYFVVIYL. The Extracellular segment spans residues 486–492; it reads PSLPHPA. The helical transmembrane segment at 493–513 threads the bilayer; that stretch reads YFILVALLAIVYLGLTTYLVW. Residues 514–547 lie on the Cytoplasmic side of the membrane; it reads TCFIAHGVTLLAHSSHQHFLYGLPDVEEKGKISG.

The protein belongs to the NRAMP family.

It is found in the late endosome membrane. Its subcellular location is the lysosome membrane. It catalyses the reaction Zn(2+)(in) + H(+)(out) = Zn(2+)(out) + H(+)(in). It carries out the reaction Fe(2+)(in) + H(+)(out) = Fe(2+)(out) + H(+)(in). The enzyme catalyses Mn(2+)(in) + H(+)(out) = Mn(2+)(out) + H(+)(in). In terms of biological role, macrophage-specific antiporter that fluxes metal ions in either direction against a proton gradient. Localized to late endosomal lysosomal membranes, delivers bivalent cations from the cytosol into these acidic compartments where they may directly affect antimicrobial activity. Involved in iron metabolism and host natural resistance to infection with intracellular parasites. Pathogen resistance involves sequestration of Fe(2+) and Mn(2+), cofactors of both prokaryotic and eukaryotic catalases and superoxide dismutases, not only to protect the macrophage against its own generation of reactive oxygen species, but to deny the cations to the pathogen for synthesis of its protective enzymes. The polypeptide is Natural resistance-associated macrophage protein 1 (SLC11A1) (Canis lupus familiaris (Dog)).